Consider the following 116-residue polypeptide: UPF0342 protein LBA1592 (116 aa).

The protein belongs to the UPF0342 family.

The sequence is that of UPF0342 protein LBA1592 from Lactobacillus acidophilus (strain ATCC 700396 / NCK56 / N2 / NCFM).